Here is a 321-residue protein sequence, read N- to C-terminus: Urease accessory protein UreD (321 aa).

Belongs to the UreD family. As to quaternary structure, ureD, UreF and UreG form a complex that acts as a GTP-hydrolysis-dependent molecular chaperone, activating the urease apoprotein by helping to assemble the nickel containing metallocenter of UreC. The UreE protein probably delivers the nickel.

The protein resides in the cytoplasm. Its function is as follows. Required for maturation of urease via the functional incorporation of the urease nickel metallocenter. The chain is Urease accessory protein UreD from Photorhabdus laumondii subsp. laumondii (strain DSM 15139 / CIP 105565 / TT01) (Photorhabdus luminescens subsp. laumondii).